Consider the following 327-residue polypeptide: Methionine import ATP-binding protein MetN (327 aa).

The ABC transporter domain maps to 3–239 (VELKNIEKIY…PKHAVTKELL (237 aa)). 36–43 (GYSGAGKS) serves as a coordination point for ATP.

It belongs to the ABC transporter superfamily. Methionine importer (TC 3.A.1.24) family. In terms of assembly, the complex is composed of two ATP-binding proteins (MetN), two transmembrane proteins (MetI) and a solute-binding protein (MetQ).

The protein resides in the cell inner membrane. The enzyme catalyses L-methionine(out) + ATP + H2O = L-methionine(in) + ADP + phosphate + H(+). The catalysed reaction is D-methionine(out) + ATP + H2O = D-methionine(in) + ADP + phosphate + H(+). Part of the ABC transporter complex MetNIQ involved in methionine import. Responsible for energy coupling to the transport system. The sequence is that of Methionine import ATP-binding protein MetN from Helicobacter pylori (strain J99 / ATCC 700824) (Campylobacter pylori J99).